A 276-amino-acid polypeptide reads, in one-letter code: Phosphate import ATP-binding protein PstB (276 aa).

The region spanning 23 to 271 (VNNKNIVYDT…PSDQRTEDYI (249 aa)) is the ABC transporter domain. 62–69 (GPSGCGKS) serves as a coordination point for ATP.

Belongs to the ABC transporter superfamily. Phosphate importer (TC 3.A.1.7) family. In terms of assembly, the complex is composed of two ATP-binding proteins (PstB), two transmembrane proteins (PstC and PstA) and a solute-binding protein (PstS).

It is found in the cell membrane. The enzyme catalyses phosphate(out) + ATP + H2O = ADP + 2 phosphate(in) + H(+). In terms of biological role, part of the ABC transporter complex PstSACB involved in phosphate import. Responsible for energy coupling to the transport system. In Oceanobacillus iheyensis (strain DSM 14371 / CIP 107618 / JCM 11309 / KCTC 3954 / HTE831), this protein is Phosphate import ATP-binding protein PstB.